We begin with the raw amino-acid sequence, 62 residues long: Large ribosomal subunit protein uL30 (62 aa).

This sequence belongs to the universal ribosomal protein uL30 family. Part of the 50S ribosomal subunit.

This is Large ribosomal subunit protein uL30 from Polynucleobacter asymbioticus (strain DSM 18221 / CIP 109841 / QLW-P1DMWA-1) (Polynucleobacter necessarius subsp. asymbioticus).